The primary structure comprises 185 residues: Transcription termination/antitermination protein NusG (185 aa).

In terms of domain architecture, KOW spans 134-163 (VGQQVRIVEGPFATFSGEVEEVMSERNKVR).

The protein belongs to the NusG family.

In terms of biological role, participates in transcription elongation, termination and antitermination. This is Transcription termination/antitermination protein NusG from Treponema pallidum (strain Nichols).